The primary structure comprises 339 residues: Dihydroorotate dehydrogenase (quinone) (339 aa).

FMN is bound by residues 61–65 (AGLDK) and Thr-85. Lys-65 serves as a coordination point for substrate. 110–114 (NRMGF) serves as a coordination point for substrate. FMN is bound by residues Asn-138 and Asn-171. Asn-171 is a binding site for substrate. The active-site Nucleophile is Ser-174. Substrate is bound at residue Asn-176. The FMN site is built by Lys-216 and Thr-244. 245–246 (NT) contributes to the substrate binding site. Residues Gly-267, Gly-296, and 317–318 (YS) contribute to the FMN site.

Belongs to the dihydroorotate dehydrogenase family. Type 2 subfamily. In terms of assembly, monomer. FMN is required as a cofactor.

It is found in the cell membrane. The catalysed reaction is (S)-dihydroorotate + a quinone = orotate + a quinol. It participates in pyrimidine metabolism; UMP biosynthesis via de novo pathway; orotate from (S)-dihydroorotate (quinone route): step 1/1. Its function is as follows. Catalyzes the conversion of dihydroorotate to orotate with quinone as electron acceptor. The chain is Dihydroorotate dehydrogenase (quinone) from Teredinibacter turnerae (strain ATCC 39867 / T7901).